The sequence spans 323 residues: Beta-ketoacyl-[acyl-carrier-protein] synthase III (323 aa).

Catalysis depends on residues Cys-114 and His-250. The interval 251 to 255 (QANIR) is ACP-binding. Asn-280 is an active-site residue.

The protein belongs to the thiolase-like superfamily. FabH family. As to quaternary structure, homodimer.

Its subcellular location is the cytoplasm. The enzyme catalyses malonyl-[ACP] + acetyl-CoA + H(+) = 3-oxobutanoyl-[ACP] + CO2 + CoA. It participates in lipid metabolism; fatty acid biosynthesis. Functionally, catalyzes the condensation reaction of fatty acid synthesis by the addition to an acyl acceptor of two carbons from malonyl-ACP. Catalyzes the first condensation reaction which initiates fatty acid synthesis and may therefore play a role in governing the total rate of fatty acid production. Possesses both acetoacetyl-ACP synthase and acetyl transacylase activities. Its substrate specificity determines the biosynthesis of branched-chain and/or straight-chain of fatty acids. The polypeptide is Beta-ketoacyl-[acyl-carrier-protein] synthase III (Ruegeria sp. (strain TM1040) (Silicibacter sp.)).